The following is an 861-amino-acid chain: Leucine--tRNA ligase (861 aa).

Positions 42 to 52 (PYPSGRLHMGH) match the 'HIGH' region motif. A 'KMSKS' region motif is present at residues 619–623 (KMSKS). K622 provides a ligand contact to ATP.

The protein belongs to the class-I aminoacyl-tRNA synthetase family.

It is found in the cytoplasm. The enzyme catalyses tRNA(Leu) + L-leucine + ATP = L-leucyl-tRNA(Leu) + AMP + diphosphate. This chain is Leucine--tRNA ligase, found in Haemophilus ducreyi (strain 35000HP / ATCC 700724).